A 200-amino-acid chain; its full sequence is MARYIGPKAKISRRFNEPIFGPSKALQKKNYPPGQHGKIRKKKSEYAIQLMEKGKAKYIYGLLEKQFANLFYKAAKKKGVTGELLLQYLETRLDNVVYRLGITPTRRSARQLVSHKHITVNGKIVNIPSYALKVGDIIGLTEKTKSSNAITERISSHSHNKNNWLEWDSKQMIGKVMSLPHREEIPEKINEQSIVELYSK.

Residues 91-150 (TRLDNVVYRLGITPTRRSARQLVSHKHITVNGKIVNIPSYALKVGDIIGLTEKTKSSNAI) form the S4 RNA-binding domain.

It belongs to the universal ribosomal protein uS4 family. As to quaternary structure, part of the 30S ribosomal subunit. Contacts protein S5. The interaction surface between S4 and S5 is involved in control of translational fidelity.

Functionally, one of the primary rRNA binding proteins, it binds directly to 16S rRNA where it nucleates assembly of the body of the 30S subunit. Its function is as follows. With S5 and S12 plays an important role in translational accuracy. The sequence is that of Small ribosomal subunit protein uS4 from Amoebophilus asiaticus (strain 5a2).